Here is a 251-residue protein sequence, read N- to C-terminus: 5'-nucleotidase SurE (251 aa).

Asp8, Asp9, Ser39, and Asn95 together coordinate a divalent metal cation.

The protein belongs to the SurE nucleotidase family. Requires a divalent metal cation as cofactor.

It localises to the cytoplasm. It catalyses the reaction a ribonucleoside 5'-phosphate + H2O = a ribonucleoside + phosphate. In terms of biological role, nucleotidase that shows phosphatase activity on nucleoside 5'-monophosphates. In Ralstonia nicotianae (strain ATCC BAA-1114 / GMI1000) (Ralstonia solanacearum), this protein is 5'-nucleotidase SurE.